The primary structure comprises 92 residues: Small ribosomal subunit protein uS19 (92 aa).

The protein belongs to the universal ribosomal protein uS19 family.

In terms of biological role, protein S19 forms a complex with S13 that binds strongly to the 16S ribosomal RNA. The polypeptide is Small ribosomal subunit protein uS19 (Corynebacterium efficiens (strain DSM 44549 / YS-314 / AJ 12310 / JCM 11189 / NBRC 100395)).